A 395-amino-acid polypeptide reads, in one-letter code: Xylose isomerase (395 aa).

Residues histidine 54 and glutamate 57 contribute to the active site. The interval 80-108 (AVPAGAGRDRHEGADGDDEPVHAPGCSRD) is disordered. Glutamate 189, glutamate 225, histidine 228, aspartate 253, aspartate 263, aspartate 265, and aspartate 295 together coordinate Mg(2+).

This sequence belongs to the xylose isomerase family. In terms of assembly, homotetramer. It depends on Mg(2+) as a cofactor.

The protein localises to the cytoplasm. It catalyses the reaction alpha-D-xylose = alpha-D-xylulofuranose. This is Xylose isomerase from Streptomyces lividans.